Consider the following 493-residue polypeptide: GTPase Der (493 aa).

An EngA-type G 1 domain is found at 3–166 (PVIALVGRPN…EALGIFPKDN (164 aa)). Residues 9-16 (GRPNVGKS), 56-60 (DTGGI), and 118-121 (NKVD) contribute to the GTP site. The tract at residues 166-195 (NAEEEGEGEPASEEVAEGEEPTRIPGPSEK) is disordered. A compositionally biased stretch (acidic residues) spans 167–184 (AEEEGEGEPASEEVAEGE). The 174-residue stretch at 198-371 (IKIAIIGRPN…SVQESFRSAV (174 aa)) folds into the EngA-type G 2 domain. GTP contacts are provided by residues 204–211 (GRPNVGKS), 251–255 (DTAGV), and 316–319 (NKWD). Residues 372–456 (TRWPTSRLTS…PIRIEYKGGE (85 aa)) enclose the KH-like domain. Basic and acidic residues predominate over residues 454-463 (GGENPYEGKK). The interval 454–493 (GGENPYEGKKNSLTARQVNKKRRLMSHHKKAEKKKKDKRR) is disordered. The span at 471–493 (VNKKRRLMSHHKKAEKKKKDKRR) shows a compositional bias: basic residues.

This sequence belongs to the TRAFAC class TrmE-Era-EngA-EngB-Septin-like GTPase superfamily. EngA (Der) GTPase family. In terms of assembly, associates with the 50S ribosomal subunit.

GTPase that plays an essential role in the late steps of ribosome biogenesis. This is GTPase Der from Pseudomonas aeruginosa (strain ATCC 15692 / DSM 22644 / CIP 104116 / JCM 14847 / LMG 12228 / 1C / PRS 101 / PAO1).